Reading from the N-terminus, the 55-residue chain is Large ribosomal subunit protein bL33 (55 aa).

It belongs to the bacterial ribosomal protein bL33 family.

This Proteus mirabilis (strain HI4320) protein is Large ribosomal subunit protein bL33.